A 574-amino-acid polypeptide reads, in one-letter code: MKFPWKVFKTTLLLLLLSHSLASVPSEDQPGDSYSHGQSCLGCVVLVSVIEQLAEVHNSSVQVAMERLCSYLPEKLFLKTACYFLVQTFGSDIIKLLDEAMKADVVCYALEFCKRGAVQPQCHLYPLPQEAWESALEKARQVLRRSSTMKYPRSGRNICSLPFLTKICQKIELSIKKAVPFKDIDSDKHSVFPTLRGYHWRGRDCNDSDKTVYPGRRPDNWDIHQDSNCNGIWGIDPKDGIPYEKKFCEGSQPRGIILLGDSAGAHFHIPPEWLTASQMSVNSFLNLPSALTDELNWPQLSGVTGFLDSTSGIEEKSIYHRLRKRNHCNHRDYQSISKNGASSRNLKNFIESLSRNQASDHPAIVLYAMIGNDVCNSKADTVPEMTTPEQMYANVMQTLTHLNSHLPNGSHVILYGLPDGTFLWDSLHNRYHPLGQLNKDVTYAQFFSFLRCLQLNPCNGWMSSNKTLRTLTSERAEQLSNTLKKIATTETFANFDLFYVDFAFHEIIEDWQKRGGQPWQLIEPVDGFHPNEVASLLQANRVWEKIQLQWPHVLGKENPFNSQIEEVFGDQGGH.

Residues 1 to 22 (MKFPWKVFKTTLLLLLLSHSLA) form the signal peptide. A propeptide spanning residues 23-33 (SVPSEDQPGDS) is cleaved from the precursor. One can recognise a Saposin B-type domain in the interval 36-117 (HGQSCLGCVV…YALEFCKRGA (82 aa)). The segment at 37 to 69 (GQSCLGCVVLVSVIEQLAEVHNSSVQVAMERLC) is important for enzyme activity, localization to cytoplasmic vesicles, and protein stability. Intrachain disulfides connect Cys-40–Cys-113, Cys-43–Cys-107, Cys-69–Cys-82, Cys-122–Cys-452, Cys-159–Cys-168, Cys-205–Cys-229, Cys-248–Cys-328, and Cys-375–Cys-458. N-linked (GlcNAc...) asparagine glycosylation occurs at Asn-58. A lipopolysaccharide binding region spans residues 172–176 (ELSIK). The Ca(2+) site is built by Asp-183, Asp-185, Asp-187, His-189, Asp-204, Asn-206, Asp-207, Asp-209, Val-212, Asp-222, Asp-226, Asn-228, Asn-230, Ile-232, and Glu-244. An N-linked (GlcNAc...) asparagine glycan is attached at Asn-206. Ser-262 is an active-site residue. 2 N-linked (GlcNAc...) asparagine glycosylation sites follow: Asn-408 and Asn-465.

As to quaternary structure, heterodimer of the large and small subunits; disulfide-linked. The cofactor is Ca(2+). Post-translationally, cleaved into a large and a small subunit. In terms of processing, the small subunit is N-glycosylated. Detected in peritoneal macrophages (at protein level). Strongly expressed in kidney cortex, where it may be produced by proximal tubule cells. In liver, expressed at high levels in Kupffer cells. Expressed by dendritic cells. Detected at low levels in alveolar macrophages.

The protein resides in the secreted. Its subcellular location is the cytoplasmic vesicle. It catalyses the reaction a 3-(acyloxy)acyl derivative of bacterial toxin + H2O = a 3-hydroxyacyl derivative of bacterial toxin + a fatty acid + H(+). Its function is as follows. Removes the secondary (acyloxyacyl-linked) fatty acyl chains from the lipid A region of bacterial lipopolysaccharides (LPS). By breaking down LPS, terminates the host response to bacterial infection and prevents prolonged and damaging inflammatory responses. In peritoneal macrophages, seems to be important for recovery from a state of immune tolerance following infection by Gram-negative bacteria. This Mus musculus (Mouse) protein is Acyloxyacyl hydrolase.